Consider the following 489-residue polypeptide: L-arabinose isomerase (489 aa).

4 residues coordinate Mn(2+): E300, E325, H342, and H441.

Belongs to the arabinose isomerase family. Mn(2+) is required as a cofactor.

The catalysed reaction is beta-L-arabinopyranose = L-ribulose. Its pathway is carbohydrate degradation; L-arabinose degradation via L-ribulose; D-xylulose 5-phosphate from L-arabinose (bacterial route): step 1/3. Functionally, catalyzes the conversion of L-arabinose to L-ribulose. The sequence is that of L-arabinose isomerase from Clostridium beijerinckii (strain ATCC 51743 / NCIMB 8052) (Clostridium acetobutylicum).